Here is a 629-residue protein sequence, read N- to C-terminus: Rho GTPase-activating protein conundrum (629 aa).

The tract at residues 185–294 (PPKSGTYADI…CRDSSSLDSC (110 aa)) is required for interaction with Moe. The segment at 237-261 (SIGRSKESRSENDARSQKKKSSEVL) is disordered. The segment covering 240-258 (RSKESRSENDARSQKKKSS) has biased composition (basic and acidic residues). Residues 359 to 565 (VSINALIRRD…ILILRGEKLF (207 aa)) enclose the Rho-GAP domain.

In terms of assembly, interacts with Moe (via FERM domain).

It is found in the cytoplasm. The protein resides in the cell membrane. It localises to the cell cortex. Its subcellular location is the cell junction. Functionally, GTPase-activating protein (GAP) for Rho1; functions with the ERM protein Moe to regulate Rho1 and control proliferation in the developing epithelium. Recruited by Moe to the cell cortex where it negatively regulates Rho1 activity. Can also promote cell proliferation independently of its GAP activity, perhaps by acting with Arf6 to positively regulate Rac1. The protein is Rho GTPase-activating protein conundrum of Drosophila melanogaster (Fruit fly).